Consider the following 470-residue polypeptide: Uronate isomerase (470 aa).

The protein belongs to the metallo-dependent hydrolases superfamily. Uronate isomerase family.

It catalyses the reaction D-glucuronate = D-fructuronate. The enzyme catalyses aldehydo-D-galacturonate = keto-D-tagaturonate. The protein operates within carbohydrate metabolism; pentose and glucuronate interconversion. The polypeptide is Uronate isomerase (Salmonella newport (strain SL254)).